The sequence spans 426 residues: 3-phosphoshikimate 1-carboxyvinyltransferase (426 aa).

3 residues coordinate 3-phosphoshikimate: lysine 21, serine 22, and arginine 26. Phosphoenolpyruvate is bound at residue lysine 21. Residues glycine 93 and arginine 121 each contribute to the phosphoenolpyruvate site. Serine 165, glutamine 167, aspartate 313, and lysine 340 together coordinate 3-phosphoshikimate. Glutamine 167 is a phosphoenolpyruvate binding site. Aspartate 313 (proton acceptor) is an active-site residue. The phosphoenolpyruvate site is built by arginine 344 and arginine 386.

This sequence belongs to the EPSP synthase family. Monomer.

The protein resides in the cytoplasm. The enzyme catalyses 3-phosphoshikimate + phosphoenolpyruvate = 5-O-(1-carboxyvinyl)-3-phosphoshikimate + phosphate. The protein operates within metabolic intermediate biosynthesis; chorismate biosynthesis; chorismate from D-erythrose 4-phosphate and phosphoenolpyruvate: step 6/7. Functionally, catalyzes the transfer of the enolpyruvyl moiety of phosphoenolpyruvate (PEP) to the 5-hydroxyl of shikimate-3-phosphate (S3P) to produce enolpyruvyl shikimate-3-phosphate and inorganic phosphate. The sequence is that of 3-phosphoshikimate 1-carboxyvinyltransferase from Solibacter usitatus (strain Ellin6076).